Consider the following 150-residue polypeptide: Deoxyuridine 5'-triphosphate nucleotidohydrolase (150 aa).

Residues 68–70 (RSG), asparagine 81, 85–87 (TID), and lysine 95 contribute to the substrate site.

It belongs to the dUTPase family. The cofactor is Mg(2+).

The catalysed reaction is dUTP + H2O = dUMP + diphosphate + H(+). The protein operates within pyrimidine metabolism; dUMP biosynthesis; dUMP from dCTP (dUTP route): step 2/2. In terms of biological role, this enzyme is involved in nucleotide metabolism: it produces dUMP, the immediate precursor of thymidine nucleotides and it decreases the intracellular concentration of dUTP so that uracil cannot be incorporated into DNA. This chain is Deoxyuridine 5'-triphosphate nucleotidohydrolase, found in Rickettsia bellii (strain OSU 85-389).